Consider the following 358-residue polypeptide: Glutamate--cysteine ligase (358 aa).

This sequence belongs to the glutamate--cysteine ligase type 2 family. YbdK subfamily.

It catalyses the reaction L-cysteine + L-glutamate + ATP = gamma-L-glutamyl-L-cysteine + ADP + phosphate + H(+). Functionally, catalyzes the synthesis of gamma-glutamylcysteine (gamma-GC), the main low-molecular-weight thiol compound instead of glutathione in halophilic archaea. In Haloferax volcanii (strain ATCC 29605 / DSM 3757 / JCM 8879 / NBRC 14742 / NCIMB 2012 / VKM B-1768 / DS2) (Halobacterium volcanii), this protein is Glutamate--cysteine ligase.